The chain runs to 73 residues: Translation initiation factor IF-1 (73 aa).

The 72-residue stretch at 1–72 (MSKKDVIELE…SRGRIVYRKK (72 aa)) folds into the S1-like domain.

It belongs to the IF-1 family. As to quaternary structure, component of the 30S ribosomal translation pre-initiation complex which assembles on the 30S ribosome in the order IF-2 and IF-3, IF-1 and N-formylmethionyl-tRNA(fMet); mRNA recruitment can occur at any time during PIC assembly.

Its subcellular location is the cytoplasm. Functionally, one of the essential components for the initiation of protein synthesis. Stabilizes the binding of IF-2 and IF-3 on the 30S subunit to which N-formylmethionyl-tRNA(fMet) subsequently binds. Helps modulate mRNA selection, yielding the 30S pre-initiation complex (PIC). Upon addition of the 50S ribosomal subunit IF-1, IF-2 and IF-3 are released leaving the mature 70S translation initiation complex. This is Translation initiation factor IF-1 from Fusobacterium nucleatum subsp. nucleatum (strain ATCC 25586 / DSM 15643 / BCRC 10681 / CIP 101130 / JCM 8532 / KCTC 2640 / LMG 13131 / VPI 4355).